A 371-amino-acid polypeptide reads, in one-letter code: Leu/Ile/Val-binding protein homolog 1 (371 aa).

An N-terminal signal peptide occupies residues 1–23 (MRKTLFSGVALAAVIAFGGSAWA).

The protein belongs to the leucine-binding protein family.

In terms of biological role, component of an amino-acid transport system. This chain is Leu/Ile/Val-binding protein homolog 1, found in Brucella suis biovar 1 (strain 1330).